Consider the following 486-residue polypeptide: Elastin-binding protein EbpS (486 aa).

Residues 1–40 are compositionally biased toward basic and acidic residues; sequence MSNNFKDDFEKNRQSIDTNSHQDHTEDVEKDQSELEHQDT. Positions 1 to 314 are disordered; that stretch reads MSNNFKDDFE…HHDRDKERKK (314 aa). Residues 2 to 204 are Extracellular-facing; it reads SNNFKDDFEK…ESKDHHSGKK (203 aa). Positions 14-34 are elastin-binding; that stretch reads QSIDTNSHQDHTEDVEKDQSE. The span at 64 to 85 shows a compositional bias: polar residues; that stretch reads TNHNKQVHNESQTSEDNVQNEA. 3 stretches are compositionally biased toward basic and acidic residues: residues 103–117, 126–160, and 180–199; these read EPSHQDSTPQHEEGY, DKSHPEPIEDNDKHETIKEAENNTEHSTVSDKSEA, and SKDKHDDVTVKQDKDESKDH. Low complexity predominate over residues 204 to 225; it reads KGAAIGAGTAGVAGAAGAMGVS. Residues 205–225 form a helical membrane-spanning segment; sequence GAAIGAGTAGVAGAAGAMGVS. Topologically, residues 226 to 319 are cytoplasmic; the sequence is KAKKHSNDAQ…KERKKGGMAK (94 aa). Residues 233 to 246 are compositionally biased toward polar residues; sequence DAQNKSNSGKVNNS. The span at 247 to 259 shows a compositional bias: basic and acidic residues; that stretch reads TEDKASEDKSKEH. Low complexity predominate over residues 278–297; that stretch reads GAASNSASAASKPHASNNAS. A compositionally biased stretch (basic and acidic residues) spans 300 to 314; it reads NDEHDHHDRDKERKK. The chain crosses the membrane as a helical span at residues 320–340; that stretch reads VLLPLIAAVLIIGALAIFGGM. Over 341-486 the chain is Extracellular; the sequence is ALNNHNNGTK…IRNGQQIVIP (146 aa). The tract at residues 351–440 is disordered; it reads ENKIANTNKN…QRQGGGQRHT (90 aa). The segment covering 361–398 has biased composition (basic and acidic residues); it reads NADESKDKDTSKDASKDKSKSTDSDKSKDDQDKATKDE. Residues 403-431 show a composition bias toward low complexity; sequence QNNANQANNQAQNNQNQQQANQNQQQQQQ. The 49-residue stretch at 437-485 folds into the LysM domain; that stretch reads QRHTVNGQENLYRIAIQYYGSGSPENVEKIRRANGLSGNNIRNGQQIVI.

It localises to the cell membrane. Promotes binding of soluble elastin peptides and tropoelastin to S.aureus cells although it is not able to promote bacterial adherence to immobilized elastin and, therefore, is not a microbial surface component recognizing adhesive matrix molecule (MSCRAMM). This is Elastin-binding protein EbpS (ebpS) from Staphylococcus aureus (strain MRSA252).